The following is a 1371-amino-acid chain: F-actin-uncapping protein LRRC16A (1371 aa).

The residue at position 1 (methionine 1) is an N-acetylmethionine. Serine 122 bears the Phosphoserine mark. LRR repeat units lie at residues serine 245 to alanine 269, asparagine 275 to isoleucine 298, proline 304 to glutamine 327, alanine 336 to glutamine 363, leucine 391 to glutamine 418, serine 423 to glycine 447, isoleucine 481 to serine 506, glutamate 543 to alanine 566, asparagine 570 to lysine 593, and leucine 654 to leucine 678. A coiled-coil region spans residues glycine 710–leucine 734. Threonine 916 carries the phosphothreonine modification. Disordered stretches follow at residues proline 957–glutamine 1000, lysine 1036–glycine 1159, and lysine 1172–valine 1371. The stretch at phenylalanine 958–lysine 981 is one LRR 11 repeat. The interval phenylalanine 958 to arginine 1082 is inhibits capping activity of CAPZA2. At serine 968 the chain carries Phosphoserine. Composition is skewed to basic and acidic residues over residues glutamate 977–threonine 986 and lysine 1036–lysine 1061. The segment at glycine 1055–threonine 1089 is necessary for localization at the cell membrane. Phosphoserine is present on residues serine 1067 and serine 1094. Composition is skewed to basic and acidic residues over residues cysteine 1106 to aspartate 1130 and glutamate 1139 to serine 1148. Over residues alanine 1190–alanine 1199 the composition is skewed to polar residues. Threonine 1228 bears the Phosphothreonine mark. The span at lysine 1231 to serine 1243 shows a compositional bias: basic and acidic residues. The span at arginine 1244–serine 1265 shows a compositional bias: low complexity. Phosphoserine is present on residues serine 1280, serine 1288, serine 1291, serine 1315, serine 1324, and serine 1331. Residues glutamine 1313–glutamate 1326 show a composition bias toward polar residues. Residues glutamine 1340–glutamine 1353 show a composition bias toward basic and acidic residues. Serine 1360 bears the Phosphoserine mark.

It belongs to the CARMIL family. As to quaternary structure, homodimer. Interacts (via C-terminus) with heterodimer capping protein (CP); this interaction uncaps barbed ends capped by CP, enhances barbed-end actin polymerization and promotes lamellipodial formation and cell migration. Interacts with heterodimer capping protein (CP). Interacts with MYO1E. Interacts with TRIO. As to expression, expressed in lung, placenta, small intestine, liver, thymus, colon, skeletal muscle, heart and brain. Higher expression in kidney.

It is found in the cytoplasm. The protein resides in the cytoskeleton. The protein localises to the cell membrane. Its subcellular location is the cell projection. It localises to the lamellipodium. Cell membrane-cytoskeleton-associated protein that plays a role in the regulation of actin polymerization at the barbed end of actin filaments. Prevents F-actin heterodimeric capping protein (CP) activity at the leading edges of migrating cells, and hence generates uncapped barbed ends and enhances actin polymerization, however, seems unable to nucleate filaments. Plays a role in lamellipodial protrusion formations and cell migration. The chain is F-actin-uncapping protein LRRC16A from Homo sapiens (Human).